A 128-amino-acid chain; its full sequence is MSGYTPDEKLRLQQLRELRRRWLKDQELSPREPVLPPRRMWPLERFWDNFLRDGAVWKNMVFKAYRSSLFAVSHVLIPMWFVHYYVKYHMATKPYTIVSSKPRIFPGDTILETGEVIPPMRDFPDQHH.

Residue Ser-2 is modified to N-acetylserine. Lys-24 carries the post-translational modification N6-acetyllysine. The helical transmembrane segment at 64-86 (AYRSSLFAVSHVLIPMWFVHYYV) threads the bilayer.

Belongs to the complex I NDUFB6 subunit family. As to quaternary structure, complex I is composed of 45 different subunits.

It localises to the mitochondrion inner membrane. Its function is as follows. Accessory subunit of the mitochondrial membrane respiratory chain NADH dehydrogenase (Complex I), that is believed not to be involved in catalysis. Complex I functions in the transfer of electrons from NADH to the respiratory chain. The immediate electron acceptor for the enzyme is believed to be ubiquinone. In Mus musculus (Mouse), this protein is NADH dehydrogenase [ubiquinone] 1 beta subcomplex subunit 6 (Ndufb6).